A 494-amino-acid chain; its full sequence is Glycerol kinase (494 aa).

Threonine 12 lines the ADP pocket. Positions 12, 13, and 14 each coordinate ATP. Position 12 (threonine 12) interacts with sn-glycerol 3-phosphate. Arginine 16 provides a ligand contact to ADP. Positions 82, 83, 134, and 243 each coordinate sn-glycerol 3-phosphate. Residues arginine 82, glutamate 83, tyrosine 134, aspartate 243, and glutamine 244 each coordinate glycerol. 2 residues coordinate ADP: threonine 265 and glycine 308. Positions 265, 308, 312, and 408 each coordinate ATP. Glycine 408 and asparagine 412 together coordinate ADP.

This sequence belongs to the FGGY kinase family.

The catalysed reaction is glycerol + ATP = sn-glycerol 3-phosphate + ADP + H(+). Its pathway is polyol metabolism; glycerol degradation via glycerol kinase pathway; sn-glycerol 3-phosphate from glycerol: step 1/1. With respect to regulation, inhibited by fructose 1,6-bisphosphate (FBP). In terms of biological role, key enzyme in the regulation of glycerol uptake and metabolism. Catalyzes the phosphorylation of glycerol to yield sn-glycerol 3-phosphate. This chain is Glycerol kinase, found in Marinomonas sp. (strain MWYL1).